Consider the following 150-residue polypeptide: Cytochrome b5 type B (150 aa).

The propeptide occupies 1–15; the sequence is MSGSMATAEASGSDG. Residues 1–21 are disordered; sequence MSGSMATAEASGSDGKGQEVE. Residue Ser23 is modified to Phosphoserine. Residues 24–100 form the Cytochrome b5 heme-binding domain; sequence VTYYRMEEVA…LKQYYIGDIH (77 aa). The residue at position 34 (Lys34) is an N6-acetyllysine. The residue at position 37 (Ser37) is a Phosphoserine. N6-methyllysine is present on Lys39. His59 and His83 together coordinate heme. Ser84 bears the Phosphoserine mark. The chain crosses the membrane as a helical span at residues 122-144; sequence CWAYWILPIIGAVLLGFLYRYYT.

This sequence belongs to the cytochrome b5 family. As to quaternary structure, component of a complex composed of cytochrome b5, NADH-cytochrome b5 reductase (CYB5R3) and MTARC2.

The protein resides in the mitochondrion outer membrane. Functionally, cytochrome b5 is a membrane-bound hemoprotein functioning as an electron carrier for several membrane-bound oxygenases. The protein is Cytochrome b5 type B (CYB5B) of Pongo abelii (Sumatran orangutan).